The primary structure comprises 773 residues: Phenylalanine--tRNA ligase beta subunit (773 aa).

Residues leucine 39–asparagine 150 enclose the tRNA-binding domain. Residues lysine 391–serine 467 form the B5 domain. Mg(2+) is bound by residues aspartate 445, aspartate 451, glutamate 454, and glutamate 455. Residues serine 682–arginine 773 enclose the FDX-ACB domain.

Belongs to the phenylalanyl-tRNA synthetase beta subunit family. Type 1 subfamily. In terms of assembly, tetramer of two alpha and two beta subunits. Mg(2+) is required as a cofactor.

Its subcellular location is the cytoplasm. The enzyme catalyses tRNA(Phe) + L-phenylalanine + ATP = L-phenylalanyl-tRNA(Phe) + AMP + diphosphate + H(+). The polypeptide is Phenylalanine--tRNA ligase beta subunit (pheT) (Campylobacter jejuni subsp. jejuni serotype O:2 (strain ATCC 700819 / NCTC 11168)).